Here is a 101-residue protein sequence, read N- to C-terminus: Trp operon repressor homolog (101 aa).

A DNA-binding region spans residues 59–82 (QREIQQNLNTSAATITRGSNMLKL).

It belongs to the TrpR family. In terms of assembly, homodimer.

The protein resides in the cytoplasm. Functionally, this protein is an aporepressor. When complexed with L-tryptophan it binds the operator region of the trp operon and prevents the initiation of transcription. The polypeptide is Trp operon repressor homolog (Mannheimia succiniciproducens (strain KCTC 0769BP / MBEL55E)).